A 46-amino-acid polypeptide reads, in one-letter code: KECMVDGTVCYIHNHNDCCGSCLCLNGPIARPWKMMVGNCKCGPKA.

4 disulfides stabilise this stretch: Cys3–Cys19, Cys10–Cys22, Cys18–Cys42, and Cys24–Cys40. The keys region for toxin activity stretch occupies residues Arg31 to Trp33.

The protein belongs to the neurotoxin 16 (SFI) family. Expressed by the venom gland.

Its subcellular location is the secreted. In terms of biological role, insecticidal toxin. It inhibits insect voltage-gated sodium channels (Nav) by partially blocking the channel pore in DUM neurons from the American cockroach, not by acting as a gating modifier. The inhibition is only partially reversible after prolonged washout. In vivo, the toxin causes flaccid paralysis followed by death when injected into Heliothis virescens larvae. It also causes uncoordinated movements followed by full paralysis to sheep blowflies (Lucilia cuprina). When the toxin is fused to snowdrop lectin, it is orally active against larvae of the tomato moth (Laconobia oleracea), the rice brown planthopper (Nilaparvata lugens), and the peach-potato aphid (Myzus persicae). The polypeptide is Mu-segestritoxin-Sf1d (Segestria florentina (Tube-web spider)).